Consider the following 212-residue polypeptide: Thymidylate kinase (212 aa).

Residues 16–21 (RAGKTT), Arg97, Arg182, and Lys192 contribute to the ATP site.

Belongs to the thymidylate kinase family. Mg(2+) is required as a cofactor.

It catalyses the reaction dTMP + ATP = dTDP + ADP. Its pathway is pyrimidine metabolism; dTTP biosynthesis. Its function is as follows. Catalyzes the phosphorylation of thymidine monophosphate (dTMP) to thymidine diphosphate (dTDP), the immediate precursor for the DNA building block dTTP, with ATP as the preferred phosphoryl donor in the presence of Mg(2+). The polypeptide is Thymidylate kinase (dtymk) (Danio rerio (Zebrafish)).